A 317-amino-acid polypeptide reads, in one-letter code: Melanocyte-stimulating hormone receptor (317 aa).

Topologically, residues 1-37 are extracellular; sequence MPVQGSQRRLLGSLNSTPTATPHLGLAANQTGARCLE. N29 carries an N-linked (GlcNAc...) asparagine glycan. Residues 38–63 form a helical membrane-spanning segment; it reads VSIPDGLFLSLGLVSLVENVLVVTAI. At 64 to 72 the chain is on the cytoplasmic side; sequence AKNRNLHSP. Residues 73-93 form a helical membrane-spanning segment; the sequence is MYCFICCLALSDLLVSGSNML. Residues 94–118 are Extracellular-facing; it reads ETAVTLLLEAGALAARAAVVQQLDN. A helical membrane pass occupies residues 119–140; it reads VIDVITCSSMLSSLCFLGAIAV. Topologically, residues 141-163 are cytoplasmic; that stretch reads DRYISIFYALRYHSIVTLPRARR. Residues 164-183 traverse the membrane as a helical segment; it reads AVAAIWVASVLFSMLFIAYY. The Extracellular portion of the chain corresponds to 184–191; that stretch reads DHAAVLLC. Residues 192–211 form a helical membrane-spanning segment; that stretch reads LVVFFLAMLVLMAVLYVHML. Topologically, residues 212 to 240 are cytoplasmic; that stretch reads ARACQHAQGIARLHKRQRPAHQGFGLKGA. The chain crosses the membrane as a helical span at residues 241–266; sequence ATLTILLGIFFLCWGPFFLHLTLIVL. Residues 267-279 are Extracellular-facing; the sequence is CPQHPTCSCIFKN. A helical membrane pass occupies residues 280 to 300; it reads FNLFLALIICNAIIDPLIYAF. Residues 301 to 317 are Cytoplasmic-facing; sequence RSQELRRTLKEVLLCSW. The S-palmitoyl cysteine moiety is linked to residue C315.

This sequence belongs to the G-protein coupled receptor 1 family. As to quaternary structure, interacts with MGRN1, but does not undergo MGRN1-mediated ubiquitination; this interaction competes with GNAS-binding and thus inhibits agonist-induced cAMP production. Interacts with OPN3; the interaction results in a decrease in MC1R-mediated cAMP signaling and ultimately a decrease in melanin production in melanocytes.

The protein resides in the cell membrane. Functionally, receptor for MSH (alpha, beta and gamma) and ACTH. The activity of this receptor is mediated by G proteins which activate adenylate cyclase. Mediates melanogenesis, the production of eumelanin (black/brown) and phaeomelanin (red/yellow), via regulation of cAMP signaling in melanocytes. This Miopithecus talapoin (Angolan talapoin) protein is Melanocyte-stimulating hormone receptor (MC1R).